The sequence spans 253 residues: Glutamate racemase (253 aa).

Substrate-binding positions include 7–8 and 39–40; these read DS and YG. Catalysis depends on Cys-70, which acts as the Proton donor/acceptor. Substrate is bound at residue 71–72; it reads NT. Catalysis depends on Cys-180, which acts as the Proton donor/acceptor. Residue 181 to 182 coordinates substrate; that stretch reads TH.

It belongs to the aspartate/glutamate racemases family.

It catalyses the reaction L-glutamate = D-glutamate. It functions in the pathway cell wall biogenesis; peptidoglycan biosynthesis. In terms of biological role, provides the (R)-glutamate required for cell wall biosynthesis. The polypeptide is Glutamate racemase (Halothermothrix orenii (strain H 168 / OCM 544 / DSM 9562)).